The primary structure comprises 29 residues: Cytochrome b6-f complex subunit 8 (29 aa).

The helical transmembrane segment at isoleucine 3–valine 23 threads the bilayer.

Belongs to the PetN family. The 4 large subunits of the cytochrome b6-f complex are cytochrome b6, subunit IV (17 kDa polypeptide, PetD), cytochrome f and the Rieske protein, while the 4 small subunits are PetG, PetL, PetM and PetN. The complex functions as a dimer.

It is found in the plastid. Its subcellular location is the chloroplast thylakoid membrane. Its function is as follows. Component of the cytochrome b6-f complex, which mediates electron transfer between photosystem II (PSII) and photosystem I (PSI), cyclic electron flow around PSI, and state transitions. This is Cytochrome b6-f complex subunit 8 from Huperzia lucidula (Shining clubmoss).